Consider the following 219-residue polypeptide: Factor in the germline alpha (219 aa).

Residues 65 to 117 form the bHLH domain; it reads ERRRVANAKERERIKNLNRGFARLKALVPFLPQSRKPSKVDILKGATEYIQVL. Residues 124–151 form a disordered region; the sequence is AKDSKKQDPDEQSYSNNSSESHTSSARQ. The span at 136-148 shows a compositional bias: low complexity; that stretch reads SYSNNSSESHTSS.

As to quaternary structure, heterodimer with TCF3/isoform E12. Germ cells. Expressed in the fetal ovary, but not by a range of other tissues. Expression increases across mid-gestation, rising some 40-fold by the time of primordial follicle formation.

It localises to the nucleus. In terms of biological role, germline specific transcription factor implicated in postnatal oocyte-specific gene expression. Plays a key regulatory role in the expression of multiple oocyte-specific genes, including those that initiate folliculogenesis and those that encode the zona pellucida (ZP1, ZP2 and ZP3) required for fertilization and early embryonic survival. Essential for oocytes to survive and form primordial follicles. The persistence of FIGLA in adult females suggests that it may regulate additional pathways that are essential for normal ovarian development. Binds to the E-box (5'-CANNTG-3') of the ZPs (ZP1, ZP2, ZP3) promoters. This Homo sapiens (Human) protein is Factor in the germline alpha (FIGLA).